Consider the following 1342-residue polypeptide: DNA-directed RNA polymerase subunit beta (1342 aa).

It belongs to the RNA polymerase beta chain family. The RNAP catalytic core consists of 2 alpha, 1 beta, 1 beta' and 1 omega subunit. When a sigma factor is associated with the core the holoenzyme is formed, which can initiate transcription.

It carries out the reaction RNA(n) + a ribonucleoside 5'-triphosphate = RNA(n+1) + diphosphate. In terms of biological role, DNA-dependent RNA polymerase catalyzes the transcription of DNA into RNA using the four ribonucleoside triphosphates as substrates. The protein is DNA-directed RNA polymerase subunit beta of Aliivibrio fischeri (strain MJ11) (Vibrio fischeri).